Consider the following 394-residue polypeptide: MSLKMMERLSTDMDGTRDVASPPARQDAAEPERTVELSGVKEGAAPNSPPRAVPVIELLRRGEGLGNIKAREQELRLQNIRTTELCRATLTPATELCRAPLTPTTELCRAPLTPTTELCRAPLTPTTELCRPPLTPAAEFCRASLTPASELCRAPSSVTGPSLTATTELCRPPIPLPTPSTGPPAEQAVEARMVQLSPTASLPLQAAGRTMLYGLNQPLASDNSGYFGDPDTFPMYTSNSRAKRRPGPIEVEISEGPQPKVVRRIFTNSRERWRQQNVNGAFAELRKLIPTHPPDKKLSKNEILRLAMKYINFLAKLLDDQEEEGNQRNKGNKDNGMVQQELLQDMLSPNSSCGSSLDGAPSPDSYSEEHDALDSKHSRNLHQAMLPIDGSGQR.

A compositionally biased stretch (basic and acidic residues) spans M1–R17. The tract at residues M1–P49 is disordered. Tandem repeats lie at residues T83–T89, T94–P100, T105–P111, T116–P122, T127–P133, S149–P155, and T167–P173. Residues T83–P173 are 7 X 7 AA approximate repeats of [TS]-E-L-C-R-[AP]-P. One can recognise a bHLH domain in the interval V262–L314. The interval L347–R394 is disordered. Over residues S367–H377 the composition is skewed to basic and acidic residues.

First expressed in patches on the ventral side of the embryo in a region that will give rise to hematopoietic tissue. By late neurula stages, expressed throughout the ventral blood island region. By tailbud stages, expression extends to probable vascular progenitor cells, but is excluded from the presumptive liver anlage. Also expressed in the central nervous system at the tailbud stage.

The protein localises to the nucleus. Functionally, transcription factor that acts synergistically with lmo2 and gata1 to specify embryonic dorsal mesoderm to a hematopoietic fate. The sequence is that of T-cell acute lymphocytic leukemia protein 1 from Xenopus laevis (African clawed frog).